The primary structure comprises 369 residues: Protein-glutamate methylesterase/protein-glutamine glutaminase 1 (369 aa).

In terms of domain architecture, Response regulatory spans 3–120; sequence KVVVVDDSAF…SLDIVKIEKD (118 aa). Residue D54 is modified to 4-aspartylphosphate. The span at 136–168 shows a compositional bias: low complexity; that stretch reads RSFRPAPAVRPAAPAALRATPRPSAAPSSAASS. Residues 136–174 form a disordered region; sequence RSFRPAPAVRPAAPAALRATPRPSAAPSSAASSTGTLQV. One can recognise a CheB-type methylesterase domain in the interval 177-369; that stretch reads GKPVRDVVAI…AQAIMNAVYK (193 aa). Active-site residues include S189, H216, and D312.

This sequence belongs to the CheB family. Post-translationally, phosphorylated by CheA. Phosphorylation of the N-terminal regulatory domain activates the methylesterase activity.

It is found in the cytoplasm. The enzyme catalyses [protein]-L-glutamate 5-O-methyl ester + H2O = L-glutamyl-[protein] + methanol + H(+). The catalysed reaction is L-glutaminyl-[protein] + H2O = L-glutamyl-[protein] + NH4(+). Involved in chemotaxis. Part of a chemotaxis signal transduction system that modulates chemotaxis in response to various stimuli. Catalyzes the demethylation of specific methylglutamate residues introduced into the chemoreceptors (methyl-accepting chemotaxis proteins or MCP) by CheR. Also mediates the irreversible deamidation of specific glutamine residues to glutamic acid. The sequence is that of Protein-glutamate methylesterase/protein-glutamine glutaminase 1 from Oleidesulfovibrio alaskensis (strain ATCC BAA-1058 / DSM 17464 / G20) (Desulfovibrio alaskensis).